The chain runs to 339 residues: Delta(9)-fatty-acid desaturase fat-6 (339 aa).

4 helical membrane passes run 52-72 (VALF…LIFE), 77-97 (TVIF…AGAH), 195-215 (YFPL…VYFW), and 219-241 (AFIA…TWCI).

Belongs to the fatty acid desaturase type 1 family. Expressed in the intestine in adult worms and in all four larval stages. Additional expression in the hypodermis in all life stages.

It localises to the membrane. The enzyme catalyses octadecanoyl-CoA + 2 Fe(II)-[cytochrome b5] + O2 + 2 H(+) = (9Z)-octadecenoyl-CoA + 2 Fe(III)-[cytochrome b5] + 2 H2O. The catalysed reaction is hexadecanoyl-CoA + 2 Fe(II)-[cytochrome b5] + O2 + 2 H(+) = (9Z)-hexadecenoyl-CoA + 2 Fe(III)-[cytochrome b5] + 2 H2O. It catalyses the reaction heptadecanoyl-CoA + 2 Fe(II)-[cytochrome b5] + O2 + 2 H(+) = (9Z)-heptadecenoyl-CoA + 2 Fe(III)-[cytochrome b5] + 2 H2O. It carries out the reaction (11E)-octadecenoyl-CoA + 2 Fe(II)-[cytochrome b5] + O2 + 2 H(+) = (9Z,11E)-octadecadienoyl-CoA + 2 Fe(III)-[cytochrome b5] + 2 H2O. It functions in the pathway lipid metabolism; monounsaturated fatty acid biosynthesis. Its pathway is lipid metabolism; fatty acid metabolism. In terms of biological role, delta(9)-fatty acid desaturase that acts preferentially on stearoyl-CoA (octadecanoyl-CoA) producing the monounsaturated oleoyl-CoA ((9Z)-octadecenoyl-CoA), one of the most abundant monounsaturated fatty acid in Caenorhabditis elegans phospholipids and triacylglycerols. Also acts on palmitoyl-CoA (hexadecanoyl-CoA), heptadecanoyl-CoA and (11E)-octadecenoyl-CoA (trans-vaccenoyl-CoA), the monounsaturated fatty acids (MUFAs) produced are further used as substrates to synthesize polyunsaturated fatty acids (PUFAs) by several other desaturases and elongases. Unlike plants, Caenorhabditis elegans desaturases seem to use fatty acyl-CoAs as substrates. This is Delta(9)-fatty-acid desaturase fat-6 (fat-6) from Caenorhabditis elegans.